A 1060-amino-acid polypeptide reads, in one-letter code: Carbamoyl phosphate synthase large chain (1060 aa).

The carboxyphosphate synthetic domain stretch occupies residues 1 to 400 (MPRDESINKV…SLNKAIRSLD (400 aa)). Positions 127, 167, 173, 174, 206, 208, 213, 240, 241, 242, 283, and 297 each coordinate ATP. The region spanning 131-326 (DSFMKKLNEP…IAKIAAKIAV (196 aa)) is the ATP-grasp 1 domain. Mg(2+) is bound by residues glutamine 283, glutamate 297, and asparagine 299. The Mn(2+) site is built by glutamine 283, glutamate 297, and asparagine 299. The segment at 401-539 (IGADGFTETP…YGCYDLEDEV (139 aa)) is oligomerization domain. The carbamoyl phosphate synthetic domain stretch occupies residues 540 to 926 (EVSDRRKVLI…YKSQLSASMD (387 aa)). Positions 664-858 (TEVLNKLGIP…LAKMAARLMM (195 aa)) constitute an ATP-grasp 2 domain. ATP is bound by residues arginine 700, lysine 739, leucine 741, glutamate 746, glycine 771, valine 772, histidine 773, serine 774, glutamine 814, and glutamate 829. Mg(2+) contacts are provided by glutamine 814, glutamate 829, and asparagine 831. 3 residues coordinate Mn(2+): glutamine 814, glutamate 829, and asparagine 831. Positions 925 to 1060 (MDLLNEGKVF…VKSLDEYHGM (136 aa)) constitute an MGS-like domain. The interval 927-1060 (LLNEGKVFIS…VKSLDEYHGM (134 aa)) is allosteric domain.

This sequence belongs to the CarB family. Composed of two chains; the small (or glutamine) chain promotes the hydrolysis of glutamine to ammonia, which is used by the large (or ammonia) chain to synthesize carbamoyl phosphate. Tetramer of heterodimers (alpha,beta)4. The cofactor is Mg(2+). It depends on Mn(2+) as a cofactor.

It carries out the reaction hydrogencarbonate + L-glutamine + 2 ATP + H2O = carbamoyl phosphate + L-glutamate + 2 ADP + phosphate + 2 H(+). The catalysed reaction is hydrogencarbonate + NH4(+) + 2 ATP = carbamoyl phosphate + 2 ADP + phosphate + 2 H(+). It participates in amino-acid biosynthesis; L-arginine biosynthesis; carbamoyl phosphate from bicarbonate: step 1/1. The protein operates within pyrimidine metabolism; UMP biosynthesis via de novo pathway; (S)-dihydroorotate from bicarbonate: step 1/3. In terms of biological role, large subunit of the glutamine-dependent carbamoyl phosphate synthetase (CPSase). CPSase catalyzes the formation of carbamoyl phosphate from the ammonia moiety of glutamine, carbonate, and phosphate donated by ATP, constituting the first step of 2 biosynthetic pathways, one leading to arginine and/or urea and the other to pyrimidine nucleotides. The large subunit (synthetase) binds the substrates ammonia (free or transferred from glutamine from the small subunit), hydrogencarbonate and ATP and carries out an ATP-coupled ligase reaction, activating hydrogencarbonate by forming carboxy phosphate which reacts with ammonia to form carbamoyl phosphate. The polypeptide is Carbamoyl phosphate synthase large chain (Methanothermobacter thermautotrophicus (strain ATCC 29096 / DSM 1053 / JCM 10044 / NBRC 100330 / Delta H) (Methanobacterium thermoautotrophicum)).